Reading from the N-terminus, the 149-residue chain is Large ribosomal subunit protein bL9 (149 aa).

It belongs to the bacterial ribosomal protein bL9 family.

Its function is as follows. Binds to the 23S rRNA. The chain is Large ribosomal subunit protein bL9 from Vibrio vulnificus (strain CMCP6).